A 416-amino-acid polypeptide reads, in one-letter code: Serine hydroxymethyltransferase (416 aa).

Residues Leu121 and 125-127 contribute to the (6S)-5,6,7,8-tetrahydrofolate site; that span reads GHL. An N6-(pyridoxal phosphate)lysine modification is found at Lys230.

Belongs to the SHMT family. In terms of assembly, homodimer. The cofactor is pyridoxal 5'-phosphate.

The protein localises to the cytoplasm. It catalyses the reaction (6R)-5,10-methylene-5,6,7,8-tetrahydrofolate + glycine + H2O = (6S)-5,6,7,8-tetrahydrofolate + L-serine. The protein operates within one-carbon metabolism; tetrahydrofolate interconversion. It functions in the pathway amino-acid biosynthesis; glycine biosynthesis; glycine from L-serine: step 1/1. Its function is as follows. Catalyzes the reversible interconversion of serine and glycine with tetrahydrofolate (THF) serving as the one-carbon carrier. This reaction serves as the major source of one-carbon groups required for the biosynthesis of purines, thymidylate, methionine, and other important biomolecules. Also exhibits THF-independent aldolase activity toward beta-hydroxyamino acids, producing glycine and aldehydes, via a retro-aldol mechanism. The protein is Serine hydroxymethyltransferase of Nitrosomonas eutropha (strain DSM 101675 / C91 / Nm57).